We begin with the raw amino-acid sequence, 132 residues long: Translation initiation factor 2 subunit beta (132 aa).

Residues 1-30 (MDYEEQLDRAMDEKPDVTGSETRFEVPDPN) are disordered.

The protein belongs to the eIF-2-beta/eIF-5 family. Heterotrimer composed of an alpha, a beta and a gamma chain.

Functionally, eIF-2 functions in the early steps of protein synthesis by forming a ternary complex with GTP and initiator tRNA. The sequence is that of Translation initiation factor 2 subunit beta from Halobacterium salinarum (strain ATCC 29341 / DSM 671 / R1).